A 295-amino-acid polypeptide reads, in one-letter code: Cytidine deaminase (295 aa).

2 CMP/dCMP-type deaminase domains span residues 48-168 and 187-295; these read TDNQ…FGPS and EDDD…YLSL. Residue 89–91 participates in substrate binding; the sequence is NME. H102 provides a ligand contact to Zn(2+). Residue E104 is the Proton donor of the active site. Residues C129 and C132 each contribute to the Zn(2+) site.

This sequence belongs to the cytidine and deoxycytidylate deaminase family. As to quaternary structure, homodimer. Requires Zn(2+) as cofactor.

It carries out the reaction cytidine + H2O + H(+) = uridine + NH4(+). The catalysed reaction is 2'-deoxycytidine + H2O + H(+) = 2'-deoxyuridine + NH4(+). Its function is as follows. This enzyme scavenges exogenous and endogenous cytidine and 2'-deoxycytidine for UMP synthesis. The protein is Cytidine deaminase of Vibrio vulnificus (strain YJ016).